Here is a 938-residue protein sequence, read N- to C-terminus: Kexin (938 aa).

A signal peptide spans 1–20 (MLPIKLLIFILGYLLSPTLQ). N-linked (GlcNAc...) asparagine glycosylation is found at Asn41 and Asn193. Residues 179 to 489 (QWHLINLKYP…YGKTDAYKMV (311 aa)) form the Peptidase S8 domain. Active-site charge relay system residues include Asp213 and His251. Intrachain disulfides connect Cys267/Cys414 and Cys359/Cys389. Ser422 (charge relay system) is an active-site residue. 4 N-linked (GlcNAc...) asparagine glycosylation sites follow: Asn441, Asn512, Asn539, and Asn599. The 150-residue stretch at 498–647 (VKPQAWYYSD…QFRIFGESID (150 aa)) folds into the P/Homo B domain. Residues 671 to 768 (EKQNSKSTTT…DNDNDNGNKK (98 aa)) form a disordered region. Residues 677-691 (STTTTSSTTTATTTS) are compositionally biased toward low complexity. Residues 711–735 (KVDNSASITTSQTASLTSSNEQHQP) are compositionally biased toward polar residues. Residues 740-762 (SDSDSDTDDENKQEGEEDNDNDN) are compositionally biased toward acidic residues. The chain crosses the membrane as a helical span at residues 775–795 (GFYLMSIAVVGFIAVLLVMKF). The Cytoplasmic portion of the chain corresponds to 796-924 (HKTPGSGRRR…SGTSTKKYKD (129 aa)). A compositionally biased stretch (basic residues) spans 798-808 (TPGSGRRRRRR). The interval 798–938 (TPGSGRRRRR…EDHKDVVGTQ (141 aa)) is disordered. Over residues 820-831 (DYSDSDDDEDDF) the composition is skewed to acidic residues. The segment covering 832-849 (DTRRADDDSFDLGHRNDQ) has biased composition (basic and acidic residues). Over residues 850–859 (RVVSASQQQR) the composition is skewed to low complexity. A compositionally biased stretch (basic and acidic residues) spans 860 to 874 (QYDRQQDETRDRLFD). The segment covering 902 to 919 (QQSAKAPSNSEGNSGTST) has biased composition (polar residues). A compositionally biased stretch (basic and acidic residues) spans 921–938 (KYKDNEADEDHKDVVGTQ).

This sequence belongs to the peptidase S8 family. Furin subfamily. Ca(2+) serves as cofactor. Post-translationally, O-glycosylated.

The protein localises to the golgi apparatus. It localises to the trans-Golgi network membrane. The enzyme catalyses Cleavage of -Lys-Arg-|-Xaa- and -Arg-Arg-|-Xaa- bonds to process yeast alpha-factor pheromone and killer toxin precursors.. The polypeptide is Kexin (KEX2) (Candida albicans (strain WO-1) (Yeast)).